The primary structure comprises 443 residues: Amino-acid acetyltransferase (443 aa).

In terms of domain architecture, N-acetyltransferase spans 296–436 (EQIRRATIND…KMYNYQRRSK (141 aa)).

It belongs to the acetyltransferase family. ArgA subfamily. Homohexamer.

It is found in the cytoplasm. It catalyses the reaction L-glutamate + acetyl-CoA = N-acetyl-L-glutamate + CoA + H(+). The protein operates within amino-acid biosynthesis; L-arginine biosynthesis; N(2)-acetyl-L-ornithine from L-glutamate: step 1/4. This is Amino-acid acetyltransferase from Salmonella arizonae (strain ATCC BAA-731 / CDC346-86 / RSK2980).